Consider the following 877-residue polypeptide: Alpha-glucosidase (877 aa).

An N-terminal signal peptide occupies residues 1–23; that stretch reads MATVGVLLLCLCLCLFAPRLCSS. Residues 89-115 are disordered; the sequence is VPQDIIPRPAPGDVLHDAPPASSAPLQ. N-linked (GlcNAc...) asparagine glycans are attached at residues N191, N298, N338, and N391. Residues D437 and E440 contribute to the active site. A glycan (N-linked (GlcNAc...) asparagine) is linked at N471. The active-site Proton donor is D534. A glycan (N-linked (GlcNAc...) asparagine) is linked at N570.

The protein belongs to the glycosyl hydrolase 31 family. In terms of tissue distribution, high levels seen in the aleurone and scutellum after germination, while low levels are found in developing seeds.

It catalyses the reaction Hydrolysis of terminal, non-reducing (1-&gt;4)-linked alpha-D-glucose residues with release of alpha-D-glucose.. The sequence is that of Alpha-glucosidase from Hordeum vulgare (Barley).